Here is a 534-residue protein sequence, read N- to C-terminus: Cytochrome c oxidase subunit 1 (534 aa).

Residues 16 to 36 (VLYFIFAIFCGMAGTAMSLII) form a helical membrane-spanning segment. Ca(2+) contacts are provided by E39, A42, and G44. The next 6 membrane-spanning stretches (helical) occupy residues 57-77 (VLVV…ALIG), 101-121 (ISFW…LVES), 147-167 (AIFA…NFIV), 182-202 (LPLF…SLPV), 235-255 (LFWF…FGII), and 267-287 (VFGE…GFLV). H62 contributes to the Fe(II)-heme a binding site. Residue H241 coordinates Cu cation. The segment at residues 241-245 (HPEVY) is a cross-link (1'-histidyl-3'-tyrosine (His-Tyr)). Y245 is a binding site for O2. Positions 290 and 291 each coordinate Cu cation. The next 2 helical transmembrane spans lie at 310-330 (MIIA…IYGG) and 338-358 (MLYA…GVAL). H368 and D369 together coordinate Mg(2+). Transmembrane regions (helical) follow at residues 372 to 392 (YVVG…LFAG) and 412 to 432 (IQFW…HFLG). A heme a3-binding site is contributed by H376. Fe(II)-heme a is bound at residue H378. Position 441 (P441) interacts with Ca(2+). A helical transmembrane segment spans residues 452–472 (YVASIGSIIAVFSLFLFIYIL).

It belongs to the heme-copper respiratory oxidase family. As to quaternary structure, component of the cytochrome c oxidase (complex IV, CIV), a multisubunit enzyme composed of a catalytic core of 3 subunits and several supernumerary subunits. The complex exists as a monomer or a dimer and forms supercomplexes (SCs) in the inner mitochondrial membrane with ubiquinol-cytochrome c oxidoreductase (cytochrome b-c1 complex, complex III, CIII). It depends on heme as a cofactor. Cu cation is required as a cofactor.

The protein resides in the mitochondrion inner membrane. The enzyme catalyses 4 Fe(II)-[cytochrome c] + O2 + 8 H(+)(in) = 4 Fe(III)-[cytochrome c] + 2 H2O + 4 H(+)(out). Its pathway is energy metabolism; oxidative phosphorylation. Functionally, component of the cytochrome c oxidase, the last enzyme in the mitochondrial electron transport chain which drives oxidative phosphorylation. The respiratory chain contains 3 multisubunit complexes succinate dehydrogenase (complex II, CII), ubiquinol-cytochrome c oxidoreductase (cytochrome b-c1 complex, complex III, CIII) and cytochrome c oxidase (complex IV, CIV), that cooperate to transfer electrons derived from NADH and succinate to molecular oxygen, creating an electrochemical gradient over the inner membrane that drives transmembrane transport and the ATP synthase. Cytochrome c oxidase is the component of the respiratory chain that catalyzes the reduction of oxygen to water. Electrons originating from reduced cytochrome c in the intermembrane space (IMS) are transferred via the dinuclear copper A center (CU(A)) of subunit 2 and heme A of subunit 1 to the active site in subunit 1, a binuclear center (BNC) formed by heme A3 and copper B (CU(B)). The BNC reduces molecular oxygen to 2 water molecules using 4 electrons from cytochrome c in the IMS and 4 protons from the mitochondrial matrix. In Kluyveromyces lactis (strain ATCC 8585 / CBS 2359 / DSM 70799 / NBRC 1267 / NRRL Y-1140 / WM37) (Yeast), this protein is Cytochrome c oxidase subunit 1 (COX1).